A 161-amino-acid chain; its full sequence is Pupal cuticle protein C1B (161 aa).

9 tandem repeats follow at residues 6–9 (AAPA), 14–17 (AAPA), 35–38 (AAPA), 87–90 (AAPV), 103–106 (AAPV), 112–115 (AAPV), 121–124 (AAPV), 130–133 (AAPV), and 143–146 (AAPA).

Component of the cuticle of the pupa of Tenebrio molitor. The polypeptide is Pupal cuticle protein C1B (Tenebrio molitor (Yellow mealworm beetle)).